A 270-amino-acid chain; its full sequence is Tetraspanin-17 (270 aa).

At 1 to 19 (MPGKHQHFQEPEVGCCGKY) the chain is on the cytoplasmic side. A helical membrane pass occupies residues 20–40 (FLFGFNIVFWVLGALFLAIGL). Residues 41–63 (WAWSEKGVLSNISALTDLGGLDP) lie on the Extracellular side of the membrane. A glycan (N-linked (GlcNAc...) asparagine) is linked at Asn-51. The helical transmembrane segment at 64–84 (VWLFVVVGGVMSVLGFAGCIG) threads the bilayer. Topologically, residues 85–94 (ALRENTFLLK) are cytoplasmic. The helical transmembrane segment at 95–115 (FFSVFLGLIFFLELATGILAF) threads the bilayer. Over 116–234 (VFKDWIRDQL…GQFEKWLQDN (119 aa)) the chain is Extracellular. Disulfide bonds link Cys-155/Cys-223, Cys-156/Cys-188, Cys-172/Cys-182, and Cys-189/Cys-202. Asn-171 carries an N-linked (GlcNAc...) asparagine glycan. Residues 235–255 (LIVVAGVFVGIALLQIFGICL) form a helical membrane-spanning segment. At 256-270 (AQNLVSDIKAVKANW) the chain is on the cytoplasmic side.

The protein belongs to the tetraspanin (TM4SF) family. Interacts with ADAM10; the interaction influences ADAM10 substrate specificity, endocytosis and turnover.

Its subcellular location is the cell membrane. Its function is as follows. Part of TspanC8 subgroup, composed of 6 members that interact with the transmembrane metalloprotease ADAM10. This interaction is required for ADAM10 exit from the endoplasmic reticulum and for enzymatic maturation and trafficking to the cell surface as well as substrate specificity. Different TspanC8/ADAM10 complexes have distinct substrates. Seems to regulate VE-cadherin expression in endothelial cells probably through interaction with ADAM10, promoting leukocyte transmigration. The sequence is that of Tetraspanin-17 (TSPAN17) from Bos taurus (Bovine).